The sequence spans 428 residues: Trigger factor (428 aa).

The PPIase FKBP-type domain occupies 166-250 (GDIVTFDFKG…IKNIKEKILP (85 aa)).

It belongs to the FKBP-type PPIase family. Tig subfamily.

Its subcellular location is the cytoplasm. It catalyses the reaction [protein]-peptidylproline (omega=180) = [protein]-peptidylproline (omega=0). Functionally, involved in protein export. Acts as a chaperone by maintaining the newly synthesized protein in an open conformation. Functions as a peptidyl-prolyl cis-trans isomerase. The protein is Trigger factor of Mycoplasma mycoides subsp. mycoides SC (strain CCUG 32753 / NCTC 10114 / PG1).